A 385-amino-acid chain; its full sequence is 3-dehydroquinate synthase (385 aa).

Residues 122–126, 146–147, Lys-159, and Lys-168 each bind NAD(+); these read GVIGD and TT. Zn(2+)-binding residues include Glu-201, His-264, and His-282.

This sequence belongs to the sugar phosphate cyclases superfamily. Dehydroquinate synthase family. The cofactor is Co(2+). Requires Zn(2+) as cofactor. It depends on NAD(+) as a cofactor.

The protein localises to the cytoplasm. It carries out the reaction 7-phospho-2-dehydro-3-deoxy-D-arabino-heptonate = 3-dehydroquinate + phosphate. The protein operates within metabolic intermediate biosynthesis; chorismate biosynthesis; chorismate from D-erythrose 4-phosphate and phosphoenolpyruvate: step 2/7. Its function is as follows. Catalyzes the conversion of 3-deoxy-D-arabino-heptulosonate 7-phosphate (DAHP) to dehydroquinate (DHQ). The protein is 3-dehydroquinate synthase of Rhodospirillum rubrum (strain ATCC 11170 / ATH 1.1.1 / DSM 467 / LMG 4362 / NCIMB 8255 / S1).